A 1012-amino-acid polypeptide reads, in one-letter code: Beta-alanine-activating enzyme (1012 aa).

ATP is bound by residues 177–185 (TTGTTGKPK), Asp411, Arg426, and Lys516.

This sequence belongs to the ATP-dependent AMP-binding enzyme family.

Covalently binds beta-alanine in an ATP-dependent manner to form a thioester bond with its phosphopantetheine group and transfers it to an, as yet, unknown acceptor. May be required for a post-translational protein modification or for post-transcriptional modification of an RNA. The sequence is that of Beta-alanine-activating enzyme from Drosophila melanogaster (Fruit fly).